We begin with the raw amino-acid sequence, 892 residues long: Putative disease resistance protein At4g10780 (892 aa).

A coiled-coil region spans residues 24-63 (SLGNYIHKLKDNIVALEKAIEDLTATRDDVLRRVQMEEGK). One can recognise an NB-ARC domain in the interval 137 to 440 (IVAAPAPKLE…ICEGFIDGNI (304 aa)). Residue 180–187 (GMGGVGKT) coordinates ATP. LRR repeat units lie at residues 515 to 536 (AVRR…PECP), 537 to 559 (ELTT…FFRH), 562 to 584 (KLVV…ISEL), 586 to 608 (ALRY…QDLK), 609 to 631 (TLIH…SKLS), and 632 to 654 (SLRT…KELH).

It belongs to the disease resistance NB-LRR family.

Its function is as follows. Potential disease resistance protein. This is Putative disease resistance protein At4g10780 from Arabidopsis thaliana (Mouse-ear cress).